We begin with the raw amino-acid sequence, 178 residues long: Large ribosomal subunit protein uL6 (178 aa).

It belongs to the universal ribosomal protein uL6 family. Part of the 50S ribosomal subunit.

Functionally, this protein binds to the 23S rRNA, and is important in its secondary structure. It is located near the subunit interface in the base of the L7/L12 stalk, and near the tRNA binding site of the peptidyltransferase center. In Corynebacterium jeikeium (strain K411), this protein is Large ribosomal subunit protein uL6.